The chain runs to 339 residues: Anthranilate phosphoribosyltransferase (339 aa).

Residues glycine 79, 82-83 (GD), serine 87, 89-92 (NIST), 107-115 (KHGNRSISS), and serine 119 contribute to the 5-phospho-alpha-D-ribose 1-diphosphate site. Glycine 79 lines the anthranilate pocket. Serine 91 provides a ligand contact to Mg(2+). Asparagine 110 is an anthranilate binding site. Arginine 165 lines the anthranilate pocket. Mg(2+)-binding residues include aspartate 224 and glutamate 225.

It belongs to the anthranilate phosphoribosyltransferase family. In terms of assembly, homodimer. Mg(2+) is required as a cofactor.

The catalysed reaction is N-(5-phospho-beta-D-ribosyl)anthranilate + diphosphate = 5-phospho-alpha-D-ribose 1-diphosphate + anthranilate. The protein operates within amino-acid biosynthesis; L-tryptophan biosynthesis; L-tryptophan from chorismate: step 2/5. In terms of biological role, catalyzes the transfer of the phosphoribosyl group of 5-phosphorylribose-1-pyrophosphate (PRPP) to anthranilate to yield N-(5'-phosphoribosyl)-anthranilate (PRA). The polypeptide is Anthranilate phosphoribosyltransferase (Listeria monocytogenes serotype 4b (strain CLIP80459)).